The following is a 399-amino-acid chain: 4-hydroxy-3-methylbut-2-enyl diphosphate reductase (399 aa).

[4Fe-4S] cluster is bound at residue C66. H96 is a binding site for (2E)-4-hydroxy-3-methylbut-2-enyl diphosphate. H96 contacts dimethylallyl diphosphate. H96 lines the isopentenyl diphosphate pocket. [4Fe-4S] cluster is bound at residue C157. H185 contacts (2E)-4-hydroxy-3-methylbut-2-enyl diphosphate. H185 is a dimethylallyl diphosphate binding site. An isopentenyl diphosphate-binding site is contributed by H185. Residue E187 is the Proton donor of the active site. T250 is a binding site for (2E)-4-hydroxy-3-methylbut-2-enyl diphosphate. C288 lines the [4Fe-4S] cluster pocket. Positions 317, 318, 319, and 379 each coordinate (2E)-4-hydroxy-3-methylbut-2-enyl diphosphate. Dimethylallyl diphosphate-binding residues include S317, S318, N319, and S379. Isopentenyl diphosphate-binding residues include S317, S318, N319, and S379.

It belongs to the IspH family. Requires [4Fe-4S] cluster as cofactor.

The enzyme catalyses isopentenyl diphosphate + 2 oxidized [2Fe-2S]-[ferredoxin] + H2O = (2E)-4-hydroxy-3-methylbut-2-enyl diphosphate + 2 reduced [2Fe-2S]-[ferredoxin] + 2 H(+). It catalyses the reaction dimethylallyl diphosphate + 2 oxidized [2Fe-2S]-[ferredoxin] + H2O = (2E)-4-hydroxy-3-methylbut-2-enyl diphosphate + 2 reduced [2Fe-2S]-[ferredoxin] + 2 H(+). The protein operates within isoprenoid biosynthesis; dimethylallyl diphosphate biosynthesis; dimethylallyl diphosphate from (2E)-4-hydroxy-3-methylbutenyl diphosphate: step 1/1. It functions in the pathway isoprenoid biosynthesis; isopentenyl diphosphate biosynthesis via DXP pathway; isopentenyl diphosphate from 1-deoxy-D-xylulose 5-phosphate: step 6/6. Catalyzes the conversion of 1-hydroxy-2-methyl-2-(E)-butenyl 4-diphosphate (HMBPP) into a mixture of isopentenyl diphosphate (IPP) and dimethylallyl diphosphate (DMAPP). Acts in the terminal step of the DOXP/MEP pathway for isoprenoid precursor biosynthesis. The polypeptide is 4-hydroxy-3-methylbut-2-enyl diphosphate reductase (Synechococcus sp. (strain WH7803)).